Consider the following 92-residue polypeptide: Small ribosomal subunit protein uS19c (92 aa).

It belongs to the universal ribosomal protein uS19 family.

It localises to the plastid. The protein localises to the chloroplast. In terms of biological role, protein S19 forms a complex with S13 that binds strongly to the 16S ribosomal RNA. In Thalassiosira pseudonana (Marine diatom), this protein is Small ribosomal subunit protein uS19c.